The following is a 324-amino-acid chain: Beta-ketoacyl-[acyl-carrier-protein] synthase III (324 aa).

Catalysis depends on residues Cys114 and His251. Residues 252–256 (QANQR) form an ACP-binding region. Residue Asn281 is part of the active site.

The protein belongs to the thiolase-like superfamily. FabH family. Homodimer.

Its subcellular location is the cytoplasm. It carries out the reaction malonyl-[ACP] + acetyl-CoA + H(+) = 3-oxobutanoyl-[ACP] + CO2 + CoA. It functions in the pathway lipid metabolism; fatty acid biosynthesis. In terms of biological role, catalyzes the condensation reaction of fatty acid synthesis by the addition to an acyl acceptor of two carbons from malonyl-ACP. Catalyzes the first condensation reaction which initiates fatty acid synthesis and may therefore play a role in governing the total rate of fatty acid production. Possesses both acetoacetyl-ACP synthase and acetyl transacylase activities. Its substrate specificity determines the biosynthesis of branched-chain and/or straight-chain of fatty acids. The sequence is that of Beta-ketoacyl-[acyl-carrier-protein] synthase III from Rhodospirillum rubrum (strain ATCC 11170 / ATH 1.1.1 / DSM 467 / LMG 4362 / NCIMB 8255 / S1).